Consider the following 1214-residue polypeptide: Protein argonaute-2 (1214 aa).

The segment at 1-412 (MGKKDKNKKG…GSIKRGTIGK (412 aa)) is disordered. Low complexity-rich tracts occupy residues 18-93 (PQPQ…QQKS) and 107-117 (KQQVQGWTKQG). Composition is skewed to gly residues over residues 118-131 (QQGGHQQGRQGQDG), 141-154 (QQGGHQQGRQGQEG), 164-177 (QQGGHQQGRQGQEG), 187-200 (QQGGHQQGRQGQEG), 210-223 (QQGGHQQGRQGQEG), 233-246 (QQGGHQQGRQGQEG), and 256-269 (QQGGHQQGRQGQEG). Low complexity predominate over residues 270-282 (GYQQRPPGQQQGG). Composition is skewed to gly residues over residues 302–315 (QQGGHQQGRQGQEG), 325–338 (QQGGHQQGRQGQEG), and 348–361 (QQGGHQQGRQGQEG). Over residues 362-394 (GYQQRPPGQQPNQTQSQGQYQSRGPPQQQQAAP) the composition is skewed to low complexity. The PAZ domain occupies 608 to 717 (LERFSLKAKI…LPIELCSIEE (110 aa)). The interaction with guide RNA stretch occupies residues 681–686 (YFHSRN). Residues 885 to 1186 (LAIVIIPQFR…ARGRVYLTGT (302 aa)) enclose the Piwi domain. Residues Asp965 and Asp1037 each contribute to the a divalent metal cation site. Interaction with guide RNA stretches follow at residues 1075–1076 (KR), 1119–1127 (HQAIQGTAK), and 1156–1178 (FPRCNRSVSYPAPAYLAHLVAAR). Residue His1173 participates in a divalent metal cation binding.

Belongs to the argonaute family. Ago subfamily. In terms of assembly, interacts with Fmr1, Dcr-1 and vig to form the RNA-induced silencing complex (RISC), a ribonucleoprotein (RNP) complex involved in translation regulation, other components of the complex are RpL5, RpL11 and Rm62. As part of the RISC complex, interacts with Tudor-SN. Interacts with Taf11. As to quaternary structure, (Microbial infection) Interacts with cricket paralysis virus protein 1A; this interaction may block the RISC activity. Mg(2+) serves as cofactor. It depends on Mn(2+) as a cofactor.

Its subcellular location is the nucleus. It localises to the cytoplasm. The protein localises to the cytoplasmic ribonucleoprotein granule. Functionally, essential for RNA interference (RNAi); double-stranded RNA induces potent and specific gene silencing. RNAi is mediated by the RNA-induced silencing complex (RISC), a sequence-specific, multicomponent nuclease that destroys or silences messenger RNAs homologous to the silencing trigger. The chain is Protein argonaute-2 from Drosophila melanogaster (Fruit fly).